A 285-amino-acid polypeptide reads, in one-letter code: Pantothenate synthetase (285 aa).

ATP is bound at residue 30–37 (MGNLHQGH). Catalysis depends on histidine 37, which acts as the Proton donor. Glutamine 61 contacts (R)-pantoate. Position 61 (glutamine 61) interacts with beta-alanine. 149–152 (GQKD) contacts ATP. Residue glutamine 155 coordinates (R)-pantoate. ATP contacts are provided by residues valine 178 and 186–189 (LSSR).

It belongs to the pantothenate synthetase family. As to quaternary structure, homodimer.

The protein localises to the cytoplasm. The catalysed reaction is (R)-pantoate + beta-alanine + ATP = (R)-pantothenate + AMP + diphosphate + H(+). The protein operates within cofactor biosynthesis; (R)-pantothenate biosynthesis; (R)-pantothenate from (R)-pantoate and beta-alanine: step 1/1. Catalyzes the condensation of pantoate with beta-alanine in an ATP-dependent reaction via a pantoyl-adenylate intermediate. The chain is Pantothenate synthetase from Aeromonas hydrophila subsp. hydrophila (strain ATCC 7966 / DSM 30187 / BCRC 13018 / CCUG 14551 / JCM 1027 / KCTC 2358 / NCIMB 9240 / NCTC 8049).